The sequence spans 436 residues: ATP-dependent protease ATPase subunit HslU (436 aa).

ATP contacts are provided by residues Ile19, 61 to 65, Asp249, Glu314, and Arg386; that span reads GVGKT.

This sequence belongs to the ClpX chaperone family. HslU subfamily. A double ring-shaped homohexamer of HslV is capped on each side by a ring-shaped HslU homohexamer. The assembly of the HslU/HslV complex is dependent on binding of ATP.

The protein resides in the cytoplasm. ATPase subunit of a proteasome-like degradation complex; this subunit has chaperone activity. The binding of ATP and its subsequent hydrolysis by HslU are essential for unfolding of protein substrates subsequently hydrolyzed by HslV. HslU recognizes the N-terminal part of its protein substrates and unfolds these before they are guided to HslV for hydrolysis. In Bartonella tribocorum (strain CIP 105476 / IBS 506), this protein is ATP-dependent protease ATPase subunit HslU.